A 257-amino-acid polypeptide reads, in one-letter code: Imidazole glycerol phosphate synthase subunit HisF (257 aa).

Active-site residues include aspartate 11 and aspartate 130.

It belongs to the HisA/HisF family. Heterodimer of HisH and HisF.

It localises to the cytoplasm. The enzyme catalyses 5-[(5-phospho-1-deoxy-D-ribulos-1-ylimino)methylamino]-1-(5-phospho-beta-D-ribosyl)imidazole-4-carboxamide + L-glutamine = D-erythro-1-(imidazol-4-yl)glycerol 3-phosphate + 5-amino-1-(5-phospho-beta-D-ribosyl)imidazole-4-carboxamide + L-glutamate + H(+). Its pathway is amino-acid biosynthesis; L-histidine biosynthesis; L-histidine from 5-phospho-alpha-D-ribose 1-diphosphate: step 5/9. Its function is as follows. IGPS catalyzes the conversion of PRFAR and glutamine to IGP, AICAR and glutamate. The HisF subunit catalyzes the cyclization activity that produces IGP and AICAR from PRFAR using the ammonia provided by the HisH subunit. The protein is Imidazole glycerol phosphate synthase subunit HisF of Shewanella frigidimarina (strain NCIMB 400).